A 252-amino-acid polypeptide reads, in one-letter code: 3-dehydroquinate dehydratase (252 aa).

Residues 46 to 48 (EWR) and Arg-82 contribute to the 3-dehydroquinate site. The active-site Proton donor/acceptor is His-143. The active-site Schiff-base intermediate with substrate is the Lys-170. 3-dehydroquinate contacts are provided by Arg-212, Ser-231, and Gln-235.

It belongs to the type-I 3-dehydroquinase family. In terms of assembly, homodimer.

It carries out the reaction 3-dehydroquinate = 3-dehydroshikimate + H2O. It functions in the pathway metabolic intermediate biosynthesis; chorismate biosynthesis; chorismate from D-erythrose 4-phosphate and phosphoenolpyruvate: step 3/7. Functionally, involved in the third step of the chorismate pathway, which leads to the biosynthesis of aromatic amino acids. Catalyzes the cis-dehydration of 3-dehydroquinate (DHQ) and introduces the first double bond of the aromatic ring to yield 3-dehydroshikimate. In Listeria monocytogenes serovar 1/2a (strain ATCC BAA-679 / EGD-e), this protein is 3-dehydroquinate dehydratase.